The following is a 306-amino-acid chain: Recombination-associated protein RdgC (306 aa).

The protein belongs to the RdgC family.

It is found in the cytoplasm. The protein localises to the nucleoid. Its function is as follows. May be involved in recombination. In Pseudomonas syringae pv. syringae (strain B728a), this protein is Recombination-associated protein RdgC.